A 218-amino-acid polypeptide reads, in one-letter code: Small ribosomal subunit protein uS3 (218 aa).

A KH type-2 domain is found at 38–106; that stretch reads IREYLTKRLS…RVHINIVEIK (69 aa).

Belongs to the universal ribosomal protein uS3 family. As to quaternary structure, part of the 30S ribosomal subunit. Forms a tight complex with proteins S10 and S14.

In terms of biological role, binds the lower part of the 30S subunit head. Binds mRNA in the 70S ribosome, positioning it for translation. The polypeptide is Small ribosomal subunit protein uS3 (Anoxybacillus flavithermus (strain DSM 21510 / WK1)).